Consider the following 477-residue polypeptide: Myosin-binding protein H (477 aa).

The disordered stretch occupies residues 1–73; sequence MMEKNTSEGP…APPSEDVPSA (73 aa). Phosphothreonine is present on residues Thr6 and Thr26. Residues 73-168 form the Fibronectin type-III 1 domain; that stretch reads APLLLTLDDV…LDQPIHIREN (96 aa). The 89-residue stretch at 172 to 260 folds into the Ig-like C2-type 1 domain; sequence PKIRVPRHLR…EDLEAKAVID (89 aa). One can recognise a Fibronectin type-III 2 domain in the interval 269–364; sequence PPSSIRLLDV…TKELAHIQKA (96 aa). The Ig-like C2-type 2 domain occupies 382 to 466; it reads PSFTQPLADH…INVLGEASVD (85 aa).

This sequence belongs to the immunoglobulin superfamily. MyBP family. As to expression, mainly expressed in the skeletal muscle. Slightly expressed in the left atrium and arteria mammaria interna.

Binds to myosin; probably involved in interaction with thick myofilaments in the A-band. This chain is Myosin-binding protein H (MYBPH), found in Homo sapiens (Human).